The following is a 555-amino-acid chain: Glutamine--tRNA ligase (555 aa).

Residues Pro35–His45 carry the 'HIGH' region motif. Residues Glu36–Asn38 and His42–Ser48 each bind ATP. Asp68 and Tyr213 together coordinate L-glutamine. ATP-binding positions include Thr232 and Arg262 to Leu263. Positions Ile269–Arg273 match the 'KMSKS' region motif.

Belongs to the class-I aminoacyl-tRNA synthetase family. Monomer.

It is found in the cytoplasm. The catalysed reaction is tRNA(Gln) + L-glutamine + ATP = L-glutaminyl-tRNA(Gln) + AMP + diphosphate. The protein is Glutamine--tRNA ligase of Stutzerimonas stutzeri (strain A1501) (Pseudomonas stutzeri).